Reading from the N-terminus, the 77-residue chain is Large ribosomal subunit protein bL31 (77 aa).

Residues Cys16, Cys18, Cys37, and Cys40 each contribute to the Zn(2+) site.

It belongs to the bacterial ribosomal protein bL31 family. Type A subfamily. As to quaternary structure, part of the 50S ribosomal subunit. Requires Zn(2+) as cofactor.

Binds the 23S rRNA. The polypeptide is Large ribosomal subunit protein bL31 (Pseudomonas fluorescens (strain SBW25)).